The following is a 95-amino-acid chain: Pyrimidine/purine nucleoside phosphorylase (95 aa).

The protein belongs to the nucleoside phosphorylase PpnP family.

The catalysed reaction is a purine D-ribonucleoside + phosphate = a purine nucleobase + alpha-D-ribose 1-phosphate. The enzyme catalyses adenosine + phosphate = alpha-D-ribose 1-phosphate + adenine. It catalyses the reaction cytidine + phosphate = cytosine + alpha-D-ribose 1-phosphate. It carries out the reaction guanosine + phosphate = alpha-D-ribose 1-phosphate + guanine. The catalysed reaction is inosine + phosphate = alpha-D-ribose 1-phosphate + hypoxanthine. The enzyme catalyses thymidine + phosphate = 2-deoxy-alpha-D-ribose 1-phosphate + thymine. It catalyses the reaction uridine + phosphate = alpha-D-ribose 1-phosphate + uracil. It carries out the reaction xanthosine + phosphate = alpha-D-ribose 1-phosphate + xanthine. In terms of biological role, catalyzes the phosphorolysis of diverse nucleosides, yielding D-ribose 1-phosphate and the respective free bases. Can use uridine, adenosine, guanosine, cytidine, thymidine, inosine and xanthosine as substrates. Also catalyzes the reverse reactions. This Vibrio cholerae serotype O1 (strain ATCC 39315 / El Tor Inaba N16961) protein is Pyrimidine/purine nucleoside phosphorylase.